The primary structure comprises 223 residues: Adenylate kinase (223 aa).

Position 10-15 (10-15 (GSGKGT)) interacts with ATP. The NMP stretch occupies residues 30–59 (ESGAIFREHIGGGTELGMKAKGYIDKGELV). Residues S31, R36, 57 to 59 (ELV), 84 to 87 (GFPR), and Q91 contribute to the AMP site. The tract at residues 125-164 (GRRLCANDPNHPNNIFIDAIKPNGDKCRVCGGDLKTRSDD) is LID. R126 is an ATP binding site. 2 residues coordinate AMP: R161 and R173. Residue G209 participates in ATP binding.

Belongs to the adenylate kinase family. As to quaternary structure, monomer.

Its subcellular location is the cytoplasm. It catalyses the reaction AMP + ATP = 2 ADP. Its pathway is purine metabolism; AMP biosynthesis via salvage pathway; AMP from ADP: step 1/1. In terms of biological role, catalyzes the reversible transfer of the terminal phosphate group between ATP and AMP. Plays an important role in cellular energy homeostasis and in adenine nucleotide metabolism. The sequence is that of Adenylate kinase from Solidesulfovibrio magneticus (strain ATCC 700980 / DSM 13731 / RS-1) (Desulfovibrio magneticus).